The following is a 418-amino-acid chain: uncharacterized protein (418 aa).

Helical transmembrane passes span 51–71 (FVMA…GALV), 79–99 (ALVV…PLFA), 110–130 (VTGI…LGAV), 163–183 (FFGP…SVLA), 224–244 (VIFG…LPLV), 258–278 (ALMS…AYVV), 289–309 (PIFL…TLSD), 315–335 (VGVQ…FPLV), 356–376 (ATGI…VVAG), and 379–399 (AAFM…LVAM).

It belongs to the major facilitator superfamily.

The protein localises to the cell membrane. This is an uncharacterized protein from Mycobacterium tuberculosis (strain CDC 1551 / Oshkosh).